We begin with the raw amino-acid sequence, 281 residues long: CCAAT/enhancer-binding protein epsilon (281 aa).

The interval 1–30 (MSHGTYYECEPRGGQQPLEFSGGRAGPGEL) is disordered. Lysine 121 participates in a covalent cross-link: Glycyl lysine isopeptide (Lys-Gly) (interchain with G-Cter in SUMO2). At serine 181 the chain carries Phosphoserine. A bZIP domain is found at 204–267 (SLEYRLRRER…DTLRNLFRQI (64 aa)). A basic motif region spans residues 208 to 245 (RLRRERNNIAVRKSRDKAKRRIMETQQKVLEYMAENER). A leucine-zipper region spans residues 246–267 (LRNRVDQLTQELDTLRNLFRQI).

It belongs to the bZIP family. C/EBP subfamily. In terms of assembly, binds DNA as a homodimer and as a heterodimer. Can form stable heterodimers with CEBPA, CEBPB and CEBPD. Interacts with GATA1 and SPI1. Interacts with SMARCD2. In terms of processing, phosphorylated.

The protein localises to the nucleus. Functionally, transcriptional activator. C/EBP are DNA-binding proteins that recognize two different motifs: the CCAAT homology common to many promoters and the enhanced core homology common to many enhancers. Required for the promyelocyte-myelocyte transition in myeloid differentiation. The polypeptide is CCAAT/enhancer-binding protein epsilon (Cebpe) (Mus musculus (Mouse)).